The primary structure comprises 248 residues: Probable transcriptional regulatory protein Mpop_0922 (248 aa).

It belongs to the TACO1 family.

It localises to the cytoplasm. This is Probable transcriptional regulatory protein Mpop_0922 from Methylorubrum populi (strain ATCC BAA-705 / NCIMB 13946 / BJ001) (Methylobacterium populi).